A 120-amino-acid polypeptide reads, in one-letter code: Large ribosomal subunit protein eL18 (120 aa).

Belongs to the eukaryotic ribosomal protein eL18 family.

This chain is Large ribosomal subunit protein eL18, found in Thermococcus onnurineus (strain NA1).